The chain runs to 190 residues: Ribosome hibernation promotion factor (190 aa).

Belongs to the HPF/YfiA ribosome-associated protein family. Long HPF subfamily. Interacts with 100S ribosomes.

Its subcellular location is the cytoplasm. In terms of biological role, required for dimerization of active 70S ribosomes into 100S ribosomes in stationary phase; 100S ribosomes are translationally inactive and sometimes present during exponential growth. The polypeptide is Ribosome hibernation promotion factor (Staphylococcus saprophyticus subsp. saprophyticus (strain ATCC 15305 / DSM 20229 / NCIMB 8711 / NCTC 7292 / S-41)).